The chain runs to 132 residues: Putative holo-[acyl-carrier-protein] synthase (132 aa).

Residues Asp-6 and Glu-67 each contribute to the Mg(2+) site.

This sequence belongs to the P-Pant transferase superfamily. AcpS family.

The catalysed reaction is apo-[ACP] + CoA = holo-[ACP] + adenosine 3',5'-bisphosphate + H(+). Functionally, transfers the 4'-phosphopantetheine moiety from coenzyme A to a Ser of acyl-carrier-protein. The polypeptide is Putative holo-[acyl-carrier-protein] synthase (new8) (Schizosaccharomyces pombe (strain 972 / ATCC 24843) (Fission yeast)).